A 365-amino-acid polypeptide reads, in one-letter code: S-type anion channel SLAH4 (365 aa).

Over 1 to 25 (MEIPSQEIHIMIDNTISRRKERKTN) the chain is Cytoplasmic. The chain crosses the membrane as a helical span at residues 26–46 (LADAEPIVLMSVLSSLHAGYF). Residues 47 to 73 (RISLSLCSQALLWKIMVHLHSELPSMA) lie on the Extracellular side of the membrane. Residues 74–94 (YYLLWYLALATQVSLCFLYAF) form a helical membrane-spanning segment. At 95 to 106 (KCIFLFDMVKEE) the chain is on the cytoplasmic side. Residues 107 to 127 (FSHYIGVNYLYAPSISCLLLL) traverse the membrane as a helical segment. Topologically, residues 128-131 (QSAP) are extracellular. Residues 132-152 (MIEPHSVLYQTLFWIFAVPVL) traverse the membrane as a helical segment. Residues 153-168 (TLDTKLYGQWFTTEKR) lie on the Cytoplasmic side of the membrane. A helical transmembrane segment spans residues 169–189 (FLSIMANPASQVSVIANLVAA). Topologically, residues 190 to 199 (RGAAEMGWKE) are extracellular. Residues 200–220 (CALCLFSLGMVHYLVIFVTLY) traverse the membrane as a helical segment. The Cytoplasmic portion of the chain corresponds to 221-235 (QRLPGGNNFPTTLRP). The helical transmembrane segment at 236 to 256 (VFFLFFAAPATASLAWNSICG) threads the bilayer. Residue asparagine 257 is a topological domain, extracellular. A helical membrane pass occupies residues 258-278 (FDTIAKMLFFLSLFIFISLVC). Topologically, residues 279-291 (RPNLLKKSIKRFN) are cytoplasmic. A helical membrane pass occupies residues 292–312 (VAWWAYSFPITFLALNSVQYA). The Extracellular portion of the chain corresponds to 313 to 321 (QEVKDHVAS). Residues 322-342 (VLMFIFSSMSVLIFISVMLLT) form a helical membrane-spanning segment. The Cytoplasmic portion of the chain corresponds to 343–365 (AANSKRLLRRDHVLWSSTGPKDK).

This sequence belongs to the SLAC1 S-type anion channel family. Homotrimer.

The protein resides in the cell membrane. Functionally, slow, weak voltage-dependent S-type anion efflux channel involved in maintenance of anion homeostasis. The sequence is that of S-type anion channel SLAH4 (SLAH4) from Arabidopsis thaliana (Mouse-ear cress).